A 219-amino-acid chain; its full sequence is Octanoyltransferase (219 aa).

Residues 31 to 219 (EDLPGFLVFC…KLKRRLLEVL (189 aa)) enclose the BPL/LPL catalytic domain. Substrate contacts are provided by residues 69-76 (RGGRATYH), 153-155 (SVG), and 166-168 (GAA). C184 acts as the Acyl-thioester intermediate in catalysis.

The protein belongs to the LipB family.

The protein localises to the cytoplasm. The enzyme catalyses octanoyl-[ACP] + L-lysyl-[protein] = N(6)-octanoyl-L-lysyl-[protein] + holo-[ACP] + H(+). It functions in the pathway protein modification; protein lipoylation via endogenous pathway; protein N(6)-(lipoyl)lysine from octanoyl-[acyl-carrier-protein]: step 1/2. Catalyzes the transfer of endogenously produced octanoic acid from octanoyl-acyl-carrier-protein onto the lipoyl domains of lipoate-dependent enzymes. Lipoyl-ACP can also act as a substrate although octanoyl-ACP is likely to be the physiological substrate. This Bdellovibrio bacteriovorus (strain ATCC 15356 / DSM 50701 / NCIMB 9529 / HD100) protein is Octanoyltransferase.